A 77-amino-acid polypeptide reads, in one-letter code: MSYPYGNPYYPQGGYPTQGYPQGNPYYQQNSNFSFIMCAQPIGLGGKQMMIPINHPIDLQYVAQQAVMYLMGQGFQA.

This is an uncharacterized protein from Acidianus ambivalens (Desulfurolobus ambivalens).